The following is a 214-amino-acid chain: NKG2-D type II integral membrane protein (214 aa).

Topologically, residues 1–56 (MGWIRDRRSPSSMEIRELHNRDVINRGAFKSRQKRTQTLITSKCGENPSPFFLARS) are cytoplasmic. The helical; Signal-anchor for type II membrane protein transmembrane segment at 57–77 (IAIAMGIRFIVMVMIYSGMII) threads the bilayer. Over 78-214 (NLLFNQEAPS…NTYICMKRTV (137 aa)) the chain is Extracellular. Intrachain disulfides connect C94–C103 and C97–C108. A C-type lectin domain is found at 98–210 (PKNWICYRNS…CLTLNTYICM (113 aa)). N-linked (GlcNAc...) asparagine glycosylation is found at N113, N129, N161, and N184. 2 cysteine pairs are disulfide-bonded: C125–C209 and C187–C201.

Homodimer; disulfide-linked. Heterohexamer composed of two subunits of KLRK1 and four subunits of HCST/DAP10. Interacts (via transmembrane domain) with HCST/DAP10 (via transmembrane domain); the interaction is required for KLRK1 NK cell surface and induces NK cell-mediated cytotoxicity. Can form disulfide-bonded heterodimer with CD94. Interacts with CEACAM1; recruits PTPN6 that dephosphorylates VAV1. In terms of tissue distribution, detected in peripheral blood leukocytes, macrophages, monocytes and natural killer cells.

The protein resides in the cell membrane. Functionally, functions as an activating and costimulatory receptor involved in immunosurveillance upon binding to various cellular stress-inducible ligands displayed at the surface of autologous tumor cells and virus-infected cells. Provides both stimulatory and costimulatory innate immune responses on activated killer (NK) cells, leading to cytotoxic activity. Acts as a costimulatory receptor for T-cell receptor (TCR) in CD8(+) T-cell-mediated adaptive immune responses by amplifying T-cell activation. Stimulates perforin-mediated elimination of ligand-expressing tumor cells. Signaling involves calcium influx, culminating in the expression of TNF-alpha. Participates in NK cell-mediated bone marrow graft rejection. May play a regulatory role in differentiation and survival of NK cells. Binds to ligands belonging to various subfamilies of MHC class I-related glycoproteins. This chain is NKG2-D type II integral membrane protein (KLRK1), found in Sus scrofa (Pig).